Here is a 301-residue protein sequence, read N- to C-terminus: 5'-adenylylsulfate reductase-like 5 (301 aa).

A signal peptide spans 1-21 (MTRCAVVAAVAAVLLVAGAAA). Positions 51-164 (CIRIEPSPPV…LVDFYKETTG (114 aa)) constitute a Thioredoxin domain. Residue N139 is glycosylated (N-linked (GlcNAc...) asparagine). A helical transmembrane segment spans residues 201–221 (FVLLAVLFIILKVAAHFVPIV). N268 carries an N-linked (GlcNAc...) asparagine glycan.

Its subcellular location is the membrane. The sequence is that of 5'-adenylylsulfate reductase-like 5 (APRL5) from Oryza sativa subsp. japonica (Rice).